Here is a 262-residue protein sequence, read N- to C-terminus: LOB domain-containing protein 18 (262 aa).

In terms of domain architecture, LOB spans 36-138; the sequence is GPCGACKFLR…AEVSYLQAHL (103 aa). A disordered region spans residues 223–262; sequence VGLGGENSHDLQALAHELLHRQGSPPPAATDHSPSRTMSR.

The protein belongs to the LOB domain-containing protein family. In terms of assembly, homodimer and heterodimer with LBD16. Interacts with GIP1. Expressed in roots, stems, leaves and flowers. Expressed in vascular tissues of hypocotyls, leaves, roots, developing floral organs and siliques.

The protein resides in the nucleus. In terms of biological role, involved in the positive regulation of tracheary element (TE) differentiation. Involved in a positive feedback loop that maintains or promotes NAC030/VND7 expression that regulates TE differentiation-related genes. Functions in the initiation and emergence of lateral roots, in conjunction with LBD16, downstream of ARF7 and ARF19. Transcriptional activator that directly regulates EXPA14, a gene encoding a cell wall-loosening factor that promotes lateral root emergence. Activates EXPA14 by directly binding to a specific region of its promoter. Transcriptional activator that directly regulates EXPA17, a gene encoding a cell wall-loosening factor that promotes lateral root emergence. Acts downstream of the auxin influx carriers AUX1 and LAX1 in the regulation of lateral root initiation and development. The protein is LOB domain-containing protein 18 (LBD18) of Arabidopsis thaliana (Mouse-ear cress).